Reading from the N-terminus, the 133-residue chain is MARKKEFRYRGYTFEELLNMSLEDFAKLLPARQRRSLKRGLSPEQKKLLRKIRLAKKGKYNKPIRTHSRDMVILPEMVGMTIHVYNGKEFVPVEIKEEMIGHYLGEFALTRKIVQHGSPGVGATRSSMFVAIK.

It belongs to the universal ribosomal protein uS19 family.

Functionally, protein S19 forms a complex with S13 that binds strongly to the 16S ribosomal RNA. The sequence is that of Small ribosomal subunit protein uS19 from Thermococcus onnurineus (strain NA1).